An 852-amino-acid polypeptide reads, in one-letter code: Mannosyl-oligosaccharide glucosidase GCS1 (852 aa).

The interval 1–31 (MTGASRRSARGRIKSSSLSPGSDEGSAYPPS) is disordered. Residues 1–51 (MTGASRRSARGRIKSSSLSPGSDEGSAYPPSIRRGKGKELVSIGAFKTNLK) lie on the Cytoplasmic side of the membrane. An Endoplasmic reticulum targeting motif is present at residues 6-12 (RRSARGR). A compositionally biased stretch (low complexity) spans 15–26 (SSSLSPGSDEGS). Residues 52 to 72 (ILVGLIILGIIVIYFVINRLV) form a helical; Signal-anchor for type II membrane protein membrane-spanning segment. The Lumenal portion of the chain corresponds to 73–852 (RHGLLFDESQ…LIMSEDYPIF (780 aa)). Residues 91 to 150 (PAPKVMDLSMFQGEHKESLYWGTYRPHVYFGVRARTPLSLVAGLMWLGVKDEMYVMRHFC) are required for endoplasmic reticulum targeting. Residues asparagine 282, asparagine 552, and asparagine 570 are each glycosylated (N-linked (GlcNAc...) asparagine). A compositionally biased stretch (polar residues) spans 574 to 583 (QELNPKTLSS). A disordered region spans residues 574 to 593 (QELNPKTLSSGLDDYPRASH). Aspartate 586 (proton donor) is an active-site residue. N-linked (GlcNAc...) asparagine glycans are attached at residues asparagine 633, asparagine 662, and asparagine 730. The active-site Proton acceptor is glutamate 819.

It belongs to the glycosyl hydrolase 63 family. As to expression, constitutively expressed in roots, stems, leaves, flowers and siliques.

Its subcellular location is the endoplasmic reticulum membrane. It catalyses the reaction N(4)-(alpha-D-Glc-(1-&gt;2)-alpha-D-Glc-(1-&gt;3)-alpha-D-Glc-(1-&gt;3)-alpha-D-Man-(1-&gt;2)-alpha-D-Man-(1-&gt;2)-alpha-D-Man-(1-&gt;3)-[alpha-D-Man-(1-&gt;2)-alpha-D-Man-(1-&gt;3)-[alpha-D-Man-(1-&gt;2)-alpha-D-Man-(1-&gt;6)]-alpha-D-Man-(1-&gt;6)]-beta-D-Man-(1-&gt;4)-beta-D-GlcNAc-(1-&gt;4)-beta-D-GlcNAc)-L-asparaginyl-[protein] + H2O = N(4)-(alpha-D-Glc-(1-&gt;3)-alpha-D-Glc-(1-&gt;3)-alpha-D-Man-(1-&gt;2)-alpha-D-Man-(1-&gt;2)-alpha-D-Man-(1-&gt;3)-[alpha-D-Man-(1-&gt;2)-alpha-D-Man-(1-&gt;3)-[alpha-D-Man-(1-&gt;2)-alpha-D-Man-(1-&gt;6)]-alpha-D-Man-(1-&gt;6)]-beta-D-Man-(1-&gt;4)-beta-D-GlcNAc-(1-&gt;4)-beta-D-GlcNAc)-L-asparaginyl-[protein] + beta-D-glucose. Its pathway is glycan metabolism; N-glycan degradation. In terms of biological role, cleaves the distal alpha 1,2-linked glucose residue from the Glc(3)Man(9)GlcNAc(2) oligosaccharide precursor. Required for the accumulation of seed storage proteins, the formation of protein bodies, cell differentiation, cellulose biosynthesis and organization (in cell walls), cell shape determination and organization (e.g. epidermal cells), and embryo development. Involved in root development. In Arabidopsis thaliana (Mouse-ear cress), this protein is Mannosyl-oligosaccharide glucosidase GCS1 (GCS1).